A 401-amino-acid chain; its full sequence is Dual-specificity RNA methyltransferase RlmN (401 aa).

E114 functions as the Proton acceptor in the catalytic mechanism. The Radical SAM core domain maps to 120 to 365 (DKGRGTLCVS…TMVRRTRGDD (246 aa)). A disulfide bridge links C127 with C370. The [4Fe-4S] cluster site is built by C134, C138, and C141. S-adenosyl-L-methionine contacts are provided by residues 187 to 188 (GE), S219, 241 to 243 (SLH), and N327. C370 serves as the catalytic S-methylcysteine intermediate.

Belongs to the radical SAM superfamily. RlmN family. The cofactor is [4Fe-4S] cluster.

The protein resides in the cytoplasm. The catalysed reaction is adenosine(2503) in 23S rRNA + 2 reduced [2Fe-2S]-[ferredoxin] + 2 S-adenosyl-L-methionine = 2-methyladenosine(2503) in 23S rRNA + 5'-deoxyadenosine + L-methionine + 2 oxidized [2Fe-2S]-[ferredoxin] + S-adenosyl-L-homocysteine. It catalyses the reaction adenosine(37) in tRNA + 2 reduced [2Fe-2S]-[ferredoxin] + 2 S-adenosyl-L-methionine = 2-methyladenosine(37) in tRNA + 5'-deoxyadenosine + L-methionine + 2 oxidized [2Fe-2S]-[ferredoxin] + S-adenosyl-L-homocysteine. Specifically methylates position 2 of adenine 2503 in 23S rRNA and position 2 of adenine 37 in tRNAs. m2A2503 modification seems to play a crucial role in the proofreading step occurring at the peptidyl transferase center and thus would serve to optimize ribosomal fidelity. The chain is Dual-specificity RNA methyltransferase RlmN from Xanthomonas campestris pv. campestris (strain B100).